The sequence spans 378 residues: Bifunctional enzyme IspD/IspF (378 aa).

The interval 1 to 222 (MTETVAIIVA…RLLSPTGAPR (222 aa)) is 2-C-methyl-D-erythritol 4-phosphate cytidylyltransferase. The 2-C-methyl-D-erythritol 2,4-cyclodiphosphate synthase stretch occupies residues 222–378 (RIGKGYDVHE…EAVALLMPKG (157 aa)). Positions 228 and 230 each coordinate a divalent metal cation. 4-CDP-2-C-methyl-D-erythritol 2-phosphate-binding positions include 228–230 (DVH) and 254–255 (HS). Residue histidine 262 coordinates a divalent metal cation. 4-CDP-2-C-methyl-D-erythritol 2-phosphate-binding positions include 276–278 (DIG), 352–355 (TTTE), phenylalanine 359, and arginine 362.

The protein in the N-terminal section; belongs to the IspD/TarI cytidylyltransferase family. IspD subfamily. In the C-terminal section; belongs to the IspF family. It depends on a divalent metal cation as a cofactor.

The enzyme catalyses 2-C-methyl-D-erythritol 4-phosphate + CTP + H(+) = 4-CDP-2-C-methyl-D-erythritol + diphosphate. It catalyses the reaction 4-CDP-2-C-methyl-D-erythritol 2-phosphate = 2-C-methyl-D-erythritol 2,4-cyclic diphosphate + CMP. The protein operates within isoprenoid biosynthesis; isopentenyl diphosphate biosynthesis via DXP pathway; isopentenyl diphosphate from 1-deoxy-D-xylulose 5-phosphate: step 2/6. Its pathway is isoprenoid biosynthesis; isopentenyl diphosphate biosynthesis via DXP pathway; isopentenyl diphosphate from 1-deoxy-D-xylulose 5-phosphate: step 4/6. Bifunctional enzyme that catalyzes the formation of 4-diphosphocytidyl-2-C-methyl-D-erythritol from CTP and 2-C-methyl-D-erythritol 4-phosphate (MEP) (IspD), and catalyzes the conversion of 4-diphosphocytidyl-2-C-methyl-D-erythritol 2-phosphate (CDP-ME2P) to 2-C-methyl-D-erythritol 2,4-cyclodiphosphate (ME-CPP) with a corresponding release of cytidine 5-monophosphate (CMP) (IspF). In Hyphomonas neptunium (strain ATCC 15444), this protein is Bifunctional enzyme IspD/IspF.